A 269-amino-acid chain; its full sequence is Tryptophan synthase alpha chain (269 aa).

Active-site proton acceptor residues include E49 and D60.

This sequence belongs to the TrpA family. In terms of assembly, tetramer of two alpha and two beta chains.

It catalyses the reaction (1S,2R)-1-C-(indol-3-yl)glycerol 3-phosphate + L-serine = D-glyceraldehyde 3-phosphate + L-tryptophan + H2O. Its pathway is amino-acid biosynthesis; L-tryptophan biosynthesis; L-tryptophan from chorismate: step 5/5. Functionally, the alpha subunit is responsible for the aldol cleavage of indoleglycerol phosphate to indole and glyceraldehyde 3-phosphate. This Klebsiella aerogenes (Enterobacter aerogenes) protein is Tryptophan synthase alpha chain.